A 211-amino-acid polypeptide reads, in one-letter code: Protein-methionine-sulfoxide reductase heme-binding subunit MsrQ (211 aa).

The next 4 helical transmembrane spans lie at 10 to 30 (WLKV…VWAI), 82 to 102 (LWCF…ELGV), 116 to 136 (PYLT…FTST), and 153 to 173 (FVYL…KIIS).

It belongs to the MsrQ family. In terms of assembly, heterodimer of a catalytic subunit (MsrP) and a heme-binding subunit (MsrQ). The cofactor is FMN. Heme b serves as cofactor.

It localises to the cell inner membrane. In terms of biological role, part of the MsrPQ system that repairs oxidized periplasmic proteins containing methionine sulfoxide residues (Met-O), using respiratory chain electrons. Thus protects these proteins from oxidative-stress damage caused by reactive species of oxygen and chlorine generated by the host defense mechanisms. MsrPQ is essential for the maintenance of envelope integrity under bleach stress, rescuing a wide series of structurally unrelated periplasmic proteins from methionine oxidation, including the primary periplasmic chaperone SurA and the lipoprotein Pal. MsrQ provides electrons for reduction to the reductase catalytic subunit MsrP, using the quinone pool of the respiratory chain. In Shigella dysenteriae serotype 1 (strain Sd197), this protein is Protein-methionine-sulfoxide reductase heme-binding subunit MsrQ.